Consider the following 279-residue polypeptide: tRNA-cytidine(32) 2-sulfurtransferase (279 aa).

The short motif at Ser-46 to Ser-51 is the PP-loop motif element. Cys-121, Cys-124, and Cys-212 together coordinate [4Fe-4S] cluster.

It belongs to the TtcA family. In terms of assembly, homodimer. It depends on Mg(2+) as a cofactor. The cofactor is [4Fe-4S] cluster.

It localises to the cytoplasm. It carries out the reaction cytidine(32) in tRNA + S-sulfanyl-L-cysteinyl-[cysteine desulfurase] + AH2 + ATP = 2-thiocytidine(32) in tRNA + L-cysteinyl-[cysteine desulfurase] + A + AMP + diphosphate + H(+). It participates in tRNA modification. Its function is as follows. Catalyzes the ATP-dependent 2-thiolation of cytidine in position 32 of tRNA, to form 2-thiocytidine (s(2)C32). The sulfur atoms are provided by the cysteine/cysteine desulfurase (IscS) system. In Marinomonas sp. (strain MWYL1), this protein is tRNA-cytidine(32) 2-sulfurtransferase.